A 122-amino-acid polypeptide reads, in one-letter code: Large ribosomal subunit protein uL14c (122 aa).

It belongs to the universal ribosomal protein uL14 family. In terms of assembly, part of the 50S ribosomal subunit.

Its subcellular location is the plastid. It localises to the chloroplast. Binds to 23S rRNA. In Cycas taitungensis (Prince sago), this protein is Large ribosomal subunit protein uL14c.